Reading from the N-terminus, the 199-residue chain is GTP-binding protein Di-Ras2 (199 aa).

GTP-binding positions include 14–21, 33–39, 61–65, and 121–124; these read GAGGVGKS, RESYIPT, DTTGS, and NKCD. Ser35 is subject to Phosphoserine. Residues 36–44 carry the Effector region motif; sequence YIPTVEDTY. Ser126 is subject to Phosphoserine. 152–153 contributes to the GTP binding site; it reads AK. Cys196 carries the cysteine methyl ester modification. Cys196 is lipidated: S-geranylgeranyl cysteine. Residues 197-199 constitute a propeptide, removed in mature form; it reads VIM.

The protein belongs to the small GTPase superfamily. Di-Ras family. Ubiquitinated by the ECS(ASB11) complex via 'Lys-11'-linked ubiquitin chains, leading to its degradation by the proteasome.

The protein localises to the cell membrane. It carries out the reaction GTP + H2O = GDP + phosphate + H(+). Displays low GTPase activity and exists predominantly in the GTP-bound form. This is GTP-binding protein Di-Ras2 (DIRAS2) from Pongo abelii (Sumatran orangutan).